The sequence spans 240 residues: MNGIEWLAKELSEHGIELSDKQKEQFQTYYRLLVEWNEKMNLTSITDEHEVYLKHFYDSITPSFYYDFNQPLTICDVGAGAGFPSIPLKVVYPELKVTIVDSLNKRIQFLNHLAAELGLTQVSFVHDRAETFGKGVNRETYDVVTARAVARLTVLSELCLPLVKKGGQFIALKSSKGEEELEEAQFGISILGGVFSDSYTFDLPEDAGERQMIIIDKRRQTSKKYPRKPGTPNKSPLLEN.

S-adenosyl-L-methionine contacts are provided by residues glycine 78, phenylalanine 83, 129–130 (AE), and arginine 147. The segment at 218–240 (RRQTSKKYPRKPGTPNKSPLLEN) is disordered.

Belongs to the methyltransferase superfamily. RNA methyltransferase RsmG family.

It localises to the cytoplasm. Functionally, specifically methylates the N7 position of guanine in position 535 of 16S rRNA. The sequence is that of Ribosomal RNA small subunit methyltransferase G from Staphylococcus haemolyticus (strain JCSC1435).